We begin with the raw amino-acid sequence, 642 residues long: Eukaryotic translation initiation factor 2A (642 aa).

WD repeat units follow at residues 69–115 (MKLS…KKDC), 186–224 (TYLI…ITKK), 289–331 (LTTG…HSLP), and 374–419 (FDAT…VFVK). A disordered region spans residues 485 to 593 (ISQHPSREAS…KETSPEEKKI (109 aa)). 2 stretches are compositionally biased toward low complexity: residues 493–507 (ASSN…AGGA) and 563–583 (TSPD…PTNN). Phosphoserine occurs at positions 564, 567, and 572.

It belongs to the WD repeat EIF2A family. Post-translationally, ubiquitinated, probably leading to its degradation. May explain why it has a short half-life of 17 minutes.

Functionally, functions in the early steps of protein synthesis of a small number of specific mRNAs. Acts by directing the binding of methionyl-tRNAi to 40S ribosomal subunits. In contrast to the eIF-2 complex, it binds methionyl-tRNAi to 40S subunits in a codon-dependent manner, whereas the eIF-2 complex binds methionyl-tRNAi to 40S subunits in a GTP-dependent manner. Specifically associates with both 40S subunits and 80S ribosomes. This is Eukaryotic translation initiation factor 2A from Saccharomyces cerevisiae (strain ATCC 204508 / S288c) (Baker's yeast).